We begin with the raw amino-acid sequence, 108 residues long: Peptidyl-prolyl cis-trans isomerase FKBP1C (108 aa).

The 89-residue stretch at 20–108 (SQTCVMHYTG…VFDVELLKLE (89 aa)) folds into the PPIase FKBP-type domain.

The protein belongs to the FKBP-type PPIase family. FKBP1 subfamily.

It carries out the reaction [protein]-peptidylproline (omega=180) = [protein]-peptidylproline (omega=0). Functionally, catalyzes the cis-trans isomerization of proline imidic peptide bonds in oligopeptides. The protein is Peptidyl-prolyl cis-trans isomerase FKBP1C of Homo sapiens (Human).